The primary structure comprises 127 residues: Holo-[acyl-carrier-protein] synthase (127 aa).

Mg(2+) is bound by residues Asp9 and Glu58.

It belongs to the P-Pant transferase superfamily. AcpS family. It depends on Mg(2+) as a cofactor.

Its subcellular location is the cytoplasm. The catalysed reaction is apo-[ACP] + CoA = holo-[ACP] + adenosine 3',5'-bisphosphate + H(+). Functionally, transfers the 4'-phosphopantetheine moiety from coenzyme A to a Ser of acyl-carrier-protein. In Shewanella baltica (strain OS223), this protein is Holo-[acyl-carrier-protein] synthase.